The following is a 183-amino-acid chain: TATA-box-binding protein (183 aa).

2 tandem repeats follow at residues 8-84 (IENV…VKML) and 99-177 (VQNI…SEEL).

The protein belongs to the TBP family.

General factor that plays a role in the activation of archaeal genes transcribed by RNA polymerase. Binds specifically to the TATA box promoter element which lies close to the position of transcription initiation. This chain is TATA-box-binding protein (tbp), found in Archaeoglobus fulgidus (strain ATCC 49558 / DSM 4304 / JCM 9628 / NBRC 100126 / VC-16).